We begin with the raw amino-acid sequence, 447 residues long: tRNA modification GTPase MnmE (447 aa).

3 residues coordinate (6S)-5-formyl-5,6,7,8-tetrahydrofolate: Arg24, Glu81, and Lys120. Residues 216 to 371 (GLNVAIAGKP…LRKELSNISG (156 aa)) enclose the TrmE-type G domain. Asn226 serves as a coordination point for K(+). Residues 226–231 (NAGKSS), 245–251 (TDIAGTT), and 270–273 (DTAG) contribute to the GTP site. Ser230 is a binding site for Mg(2+). K(+) contacts are provided by Thr245, Ile247, and Thr250. Mg(2+) is bound at residue Thr251. Lys447 contacts (6S)-5-formyl-5,6,7,8-tetrahydrofolate.

Belongs to the TRAFAC class TrmE-Era-EngA-EngB-Septin-like GTPase superfamily. TrmE GTPase family. In terms of assembly, homodimer. Heterotetramer of two MnmE and two MnmG subunits. K(+) serves as cofactor.

The protein localises to the cytoplasm. In terms of biological role, exhibits a very high intrinsic GTPase hydrolysis rate. Involved in the addition of a carboxymethylaminomethyl (cmnm) group at the wobble position (U34) of certain tRNAs, forming tRNA-cmnm(5)s(2)U34. The chain is tRNA modification GTPase MnmE from Vesicomyosocius okutanii subsp. Calyptogena okutanii (strain HA).